Here is a 509-residue protein sequence, read N- to C-terminus: Diacylglycerol kinase 5 (509 aa).

Positions 36–187 (TPASPVLVFI…IDNWHILMRM (152 aa)) constitute a DAGKc domain. A compositionally biased stretch (basic and acidic residues) spans 439 to 452 (RSVFDPSTPRHQDG). Residues 439–509 (RSVFDPSTPR…SNVHGWSHVL (71 aa)) are disordered. The segment covering 453 to 467 (AEDYDDNEDDSVAEG) has biased composition (acidic residues). Basic and acidic residues predominate over residues 468–489 (EEFRKFGAADTFKIPDEGEHSN). Positions 490 to 500 (KKGRASRRRNS) are enriched in basic residues.

This sequence belongs to the eukaryotic diacylglycerol kinase family. Monomer.

It carries out the reaction a 1,2-diacyl-sn-glycerol + ATP = a 1,2-diacyl-sn-glycero-3-phosphate + ADP + H(+). In terms of biological role, phosphorylates the second messenger diacylglycerol (DAG) to generate phosphatidic acid (PA), another important signaling molecule. PA is required for plant development and responses to abiotic stress and pathogen attack. May be involved in the accumulation of PA during cold stress. This is Diacylglycerol kinase 5 (DGK5) from Arabidopsis thaliana (Mouse-ear cress).